Here is a 407-residue protein sequence, read N- to C-terminus: Argininosuccinate synthase (407 aa).

Residue Ala-10 to Ser-18 coordinates ATP. 2 residues coordinate L-citrulline: Tyr-88 and Ser-93. Gly-118 contributes to the ATP binding site. Thr-120, Asn-124, and Asp-125 together coordinate L-aspartate. L-citrulline is bound at residue Asn-124. L-citrulline-binding residues include Arg-128, Ser-177, Ser-186, Glu-263, and Tyr-275.

It belongs to the argininosuccinate synthase family. Type 1 subfamily. Homotetramer.

It is found in the cytoplasm. It catalyses the reaction L-citrulline + L-aspartate + ATP = 2-(N(omega)-L-arginino)succinate + AMP + diphosphate + H(+). It functions in the pathway amino-acid biosynthesis; L-arginine biosynthesis; L-arginine from L-ornithine and carbamoyl phosphate: step 2/3. The chain is Argininosuccinate synthase from Clostridium botulinum (strain Eklund 17B / Type B).